A 556-amino-acid chain; its full sequence is Inositol 1,4,5-trisphosphate receptor-interacting protein (556 aa).

The N-terminal stretch at 1–15 (MALGLFRVCLVVVTA) is a signal peptide. Residues 16-88 (IINHPLLFPR…EGQQQNESRT (73 aa)) lie on the Extracellular side of the membrane. Residues Asn27 and Asn84 are each glycosylated (N-linked (GlcNAc...) asparagine). Residues 32-87 (ENEEEIIRQMQAHQEKLQLEQLRLEEEMARLAADKEAEKEALERVAEEGQQQNESR) are a coiled coil. Residues 89–107 (AWDLWSTLCMILFLVIEVW) form a helical membrane-spanning segment. Topologically, residues 108–556 (RQDHQDAPSP…ASLPPKTVIL (449 aa)) are cytoplasmic.

It belongs to the ITPRIP family. In terms of assembly, interacts with ITPR.

Its subcellular location is the cell membrane. It is found in the nucleus outer membrane. Functionally, enhances Ca(2+)-mediated inhibition of inositol 1,4,5-triphosphate receptor (ITPR) Ca(2+) release. The polypeptide is Inositol 1,4,5-trisphosphate receptor-interacting protein (ITPRIP) (Bos taurus (Bovine)).